The primary structure comprises 2377 residues: Serine/threonine-protein kinase WNK1 (2377 aa).

Disordered stretches follow at residues 1–79 (MSDG…RFFR) and 93–203 (LPGL…QQDD). T17 and T58 each carry phosphothreonine. The span at 48-64 (RTEEYRRRRHTMDKDSR) shows a compositional bias: basic and acidic residues. Low complexity-rich tracts occupy residues 101-111 (PQPSVPAVVPQ) and 127-141 (VASQVSQQPSAAASP). Residues 149–158 (SATTTVPSST) show a composition bias toward polar residues. A phosphoserine mark is found at S165 and S172. A Protein kinase domain is found at 221–479 (LKFDIEIGRG…IKDLLNHAFF (259 aa)). S231 lines the ATP pocket. Residues F283 and L299 each coordinate chloride. ATP is bound by residues 301–304 (TELM) and K351. The active-site Proton acceptor is the D368. The chloride site is built by L369 and L371. S378 and S382 each carry phosphoserine; by autocatalysis. The autoinhibitory domain stretch occupies residues 488–555 (ELAEEDDGEK…VCEGDHKTMA (68 aa)). The segment covering 573-588 (QLVREEQEKRKQEESS) has biased composition (basic and acidic residues). Disordered regions lie at residues 573–782 (QLVR…SAGT) and 1013–1114 (PAVS…SRPK). Polar residues-rich tracts occupy residues 593–628 (NEQQASVSQAGIQQLSAASTGIPTAPATSASVSTQV), 638–705 (HQQL…QSQP), and 713–733 (SMAQGQNQGQPSSSLAGVLSS). An interaction with KLHL3 region spans residues 629 to 639 (EPEEPEADQHQ). A compositionally biased stretch (low complexity) spans 734–746 (QPIQHPQQQGIQP). A compositionally biased stretch (polar residues) spans 747 to 782 (TVPSQQAVQYSLPQAASSSEGTTAQPVSQPQVSAGT). The segment covering 1018–1028 (TQQPPTTSSQQ) has biased composition (low complexity). The span at 1029–1038 (AVLESTQGVS) shows a compositional bias: polar residues. The segment covering 1042–1058 (PPEQTPITQSQPTQPVP) has biased composition (low complexity). Residues 1075 to 1085 (SDGNENAPSSS) are compositionally biased toward polar residues. The span at 1093–1114 (TKRHYRKSVRSRSRHEKTSRPK) shows a compositional bias: basic residues. Residues 1252-1255 (RFIV) carry the RFXV motif 1 motif. At S1256 the chain carries Phosphoserine. 2 disordered regions span residues 1726–1760 (GQVSTPGTHASAPVGTATGVKPGTTPPKPTKTVVP) and 1818–1847 (TMSSTTVTEAGTRLQKDGTEGHVTATSSGA). Low complexity predominate over residues 1738–1748 (PVGTATGVKPG). The residue at position 1843 (T1843) is a Phosphothreonine. The RFXV motif 2 motif lies at 1854-1857 (RFQV). A disordered region spans residues 1860–1945 (TMDDAQKERK…TKVGRFQVTT (86 aa)). Over residues 1863–1879 (DAQKERKNRSEDTKSVH) the composition is skewed to basic and acidic residues. The segment covering 1882–1900 (SSTSESSVLSSSSPESTLV) has biased composition (low complexity). 2 consecutive short sequence motifs (RFXV motif) follow at residues 1940 to 1943 (RFQV) and 1952 to 1955 (RFSV). The span at 1959 to 1969 (EDKVTELKKEG) shows a compositional bias: basic and acidic residues. 5 disordered regions span residues 1959-1984 (EDKVTELKKEGPVTSPPFRDSEQTVI), 1989-2008 (PKKEKPELAEPSHLNGPSSD), 2015-2064 (SRGT…DIED), 2107-2191 (VIIP…NLYS), and 2203-2239 (SLSAPGQGTSSTNTVGGTVSSQAAQAQPPAMTSSRKG). S1973 bears the Phosphoserine mark. The segment covering 1989–1998 (PKKEKPELAE) has biased composition (basic and acidic residues). A phosphoserine mark is found at S2006, S2007, S2022, S2024, and S2027. Low complexity predominate over residues 2035–2057 (SLPVQNLSQSLSNSFNSSYMSSD). S2116 carries the phosphoserine modification. Residues 2117-2129 (GRRRRPTKSKGSK) show a composition bias toward basic residues. Over residues 2130–2140 (SSRSSSLGNKS) the composition is skewed to low complexity. Residues 2141–2191 (PQLSGNLSGQSGTSVLHPQQTLHPAGNTPETGHNQLLQPLKPSPSSDNLYS) are compositionally biased toward polar residues. Positions 2208-2232 (GQGTSSTNTVGGTVSSQAAQAQPPA) are enriched in low complexity. The segment at 2236-2256 (SRKGTFTDDLHKLVDNWARDA) is amphipathic alpha-helix. 2 positions are modified to phosphoserine: S2265 and S2281. The disordered stretch occupies residues 2325-2344 (PAPFGTQWSGTGGPAPQPLG). A phosphoserine mark is found at S2365 and S2367.

This sequence belongs to the protein kinase superfamily. Ser/Thr protein kinase family. WNK subfamily. In terms of assembly, interacts with WNK3. Interacts with WNK4; inhibiting the activity of WNK4. Interacts with SGK1; promoting its activation. Associates with the mTORC2 complex. Interacts with UVRAG. Interacts with isoform 1; inhibiting isoform 1 activity. Mg(2+) serves as cofactor. In terms of processing, autophosphorylated at Ser-378 and Ser-382, promoting its activity. Autophosphorylation at Ser-382 is inhibited by intracellular calcium. Phosphorylation at Thr-58 increases ability to activate SGK1. Ubiquitinated by the BCR(KLHL3) complex, leading to its degradation. Also ubiquitinated by the BCR(KLHL2) complex. Post-translationally, may be O-glycosylated. As to expression, widely expressed in both adult and embryonic tissue, with highest levels observed in the testis and lower levels in heart, lung, kidney, placenta, brain and skeletal muscle. Expressed in pancreatic duct. Two isoforms are expressed in heart, a single shorter isoform in the kidney. Locates to the distal convoluted tubule, the medullary collecting duct and the cortical collecting duct of the kidney. Restricted to the nervous system, expressed preferentially in sensory neurons than in motor neurons and in general more abundant in axons than in cell bodies (at protein level). In the DRG, predominantly expressed in the satellite cells that envelop sensory neurons, but low expression also observed in the cell bodies of neurons (at protein level). In the sciatic nerve, expressed in the Schwann cells that surround axons and in a mosaic distribution of axons (at protein level). In the spinal cord, expressed in superficial layers (LI and LII), as well as in the fibers of the Lissauer tract (at protein level). Also detected in the axon fibers of dorsolateral funiculus and lateral funiculus (at protein level).

It is found in the cytoplasm. It localises to the nucleus. The protein resides in the cytoskeleton. Its subcellular location is the spindle. The catalysed reaction is L-seryl-[protein] + ATP = O-phospho-L-seryl-[protein] + ADP + H(+). It catalyses the reaction L-threonyl-[protein] + ATP = O-phospho-L-threonyl-[protein] + ADP + H(+). Its activity is regulated as follows. Activated in response to hyperosmotic stress: cell shrinkage promotes formation of a membraneless compartment that concentrates WNK1 with its substrates, OXSR1/OSR1 and STK39/SPAK. Activation requires autophosphorylation of Ser-382 and, to a lower extent, Ser-378. Autophosphorylation and subsequent activation is inhibited by increases in intracellular ionic strength: Cl(-) potently inhibits WNK1 kinase activity via direct binding. Also inhibited by K(+) ions. In terms of biological role, serine/threonine-protein kinase component of the WNK1-SPAK/OSR1 kinase cascade, which acts as a key regulator of blood pressure and regulatory volume increase by promoting ion influx. WNK1 mediates regulatory volume increase in response to hyperosmotic stress by acting as a molecular crowding sensor, which senses cell shrinkage and mediates formation of a membraneless compartment by undergoing liquid-liquid phase separation. The membraneless compartment concentrates WNK1 with its substrates, OXSR1/OSR1 and STK39/SPAK, promoting WNK1-dependent phosphorylation and activation of downstream kinases OXSR1/OSR1 and STK39/SPAK. Following activation, OXSR1/OSR1 and STK39/SPAK catalyze phosphorylation of ion cotransporters SLC12A1/NKCC2, SLC12A2/NKCC1, SLC12A5/KCC2 and SLC12A6/KCC3, regulating their activity. Phosphorylation of Na-K-Cl cotransporters SLC12A2/NKCC1 and SLC12A2/NKCC1 promote their activation and ion influx; simultaneously, phosphorylation of K-Cl cotransporters SLC12A5/KCC2 and SLC12A6/KCC3 inhibit their activity, blocking ion efflux. Also acts as a regulator of angiogenesis in endothelial cells. Also acts independently of the WNK1-SPAK/OSR1 kinase cascade by catalyzing phosphorylation of other substrates, such as SYT2, PCF11 and NEDD4L. Mediates phosphorylation of SYT2, regulating SYT2 association with phospholipids and membrane-binding. Regulates mRNA export in the nucleus by mediating phosphorylation of PCF11, thereby decreasing the association between PCF11 and POLR2A/RNA polymerase II and promoting mRNA export to the cytoplasm. Acts as a negative regulator of autophagy. Required for the abscission step during mitosis, independently of the WNK1-SPAK/OSR1 kinase cascade. WNK1 may also play a role in actin cytoskeletal reorganization. Also acts as a scaffold protein independently of its protein kinase activity: negatively regulates cell membrane localization of various transporters and channels, such as SLC4A4, SLC26A6, SLC26A9, TRPV4 and CFTR. Involved in the regulation of epithelial Na(+) channel (ENaC) by promoting activation of SGK1 in a kinase-independent manner: probably acts as a scaffold protein that promotes the recruitment of SGK1 to the mTORC2 complex in response to chloride, leading to mTORC2-dependent phosphorylation and activation of SGK1. Acts as an assembly factor for the ER membrane protein complex independently of its protein kinase activity: associates with EMC2 in the cytoplasm via its amphipathic alpha-helix, and prevents EMC2 ubiquitination and subsequent degradation, thereby promoting EMC2 stabilization. Functionally, kinase-defective isoform specifically expressed in kidney, which acts as a dominant-negative regulator of the longer isoform 1. Does not directly inhibit WNK4 and has no direct effect on sodium and chloride ion transport. Down-regulates sodium-chloride cotransporter activity indirectly by inhibiting isoform 1, it associates with isoform 1 and attenuates its kinase activity. In kidney, may play an important role regulating sodium and potassium balance. The polypeptide is Serine/threonine-protein kinase WNK1 (Mus musculus (Mouse)).